A 489-amino-acid polypeptide reads, in one-letter code: Glycogen synthase (489 aa).

ADP-alpha-D-glucose is bound at residue Arg20.

This sequence belongs to the glycosyltransferase 1 family. Bacterial/plant glycogen synthase subfamily.

It carries out the reaction [(1-&gt;4)-alpha-D-glucosyl](n) + ADP-alpha-D-glucose = [(1-&gt;4)-alpha-D-glucosyl](n+1) + ADP + H(+). The protein operates within glycan biosynthesis; glycogen biosynthesis. Synthesizes alpha-1,4-glucan chains using ADP-glucose. The chain is Glycogen synthase from Chlorobium luteolum (strain DSM 273 / BCRC 81028 / 2530) (Pelodictyon luteolum).